The sequence spans 489 residues: Adenosylhomocysteinase (489 aa).

Residues Thr68, Asp151, and Glu213 each contribute to the substrate site. Position 214–216 (214–216 (TTT)) interacts with NAD(+). Positions 243 and 247 each coordinate substrate. Residues Asn248, 277-282 (GYGDVG), Glu300, Asn335, 356-358 (IGH), and Asn403 contribute to the NAD(+) site.

The protein belongs to the adenosylhomocysteinase family. It depends on NAD(+) as a cofactor.

Its subcellular location is the cytoplasm. The catalysed reaction is S-adenosyl-L-homocysteine + H2O = L-homocysteine + adenosine. Its pathway is amino-acid biosynthesis; L-homocysteine biosynthesis; L-homocysteine from S-adenosyl-L-homocysteine: step 1/1. May play a key role in the regulation of the intracellular concentration of adenosylhomocysteine. The polypeptide is Adenosylhomocysteinase (Mycobacterium sp. (strain KMS)).